Consider the following 49-residue polypeptide: Osteocalcin (49 aa).

Residues Tyr1–Gly47 enclose the Gla domain. Residue Pro9 is modified to Hydroxyproline. Ca(2+) contacts are provided by Glu17, Glu21, Glu24, and Asp30. Residues Glu17, Glu21, and Glu24 each carry the 4-carboxyglutamate modification. Cysteines 23 and 29 form a disulfide.

It belongs to the osteocalcin/matrix Gla protein family. Post-translationally, gamma-carboxyglutamic acid residues are formed by vitamin K dependent carboxylation. These residues are essential for the binding of calcium.

The protein resides in the secreted. Functionally, the carboxylated form is one of the main organic components of the bone matrix, which constitutes 1-2% of the total bone protein: it acts as a negative regulator of bone formation and is required to limit bone formation without impairing bone resorption or mineralization. The carboxylated form binds strongly to apatite and calcium. In terms of biological role, the uncarboxylated form acts as a hormone secreted by osteoblasts, which regulates different cellular processes, such as energy metabolism, male fertility and brain development. Regulates of energy metabolism by acting as a hormone favoring pancreatic beta-cell proliferation, insulin secretion and sensitivity and energy expenditure. Uncarboxylated osteocalcin hormone also promotes testosterone production in the testes: acts as a ligand for G protein-coupled receptor GPRC6A at the surface of Leydig cells, initiating a signaling response that promotes the expression of enzymes required for testosterone synthesis in a CREB-dependent manner. Also acts as a regulator of brain development: osteocalcin hormone crosses the blood-brain barrier and acts as a ligand for GPR158 on neurons, initiating a signaling response that prevents neuronal apoptosis in the hippocampus, favors the synthesis of all monoamine neurotransmitters and inhibits that of gamma-aminobutyric acid (GABA). Osteocalcin also crosses the placenta during pregnancy and maternal osteocalcin is required for fetal brain development. This is Osteocalcin (BGLAP) from Bison priscus (Steppe wisent).